A 262-amino-acid polypeptide reads, in one-letter code: MASYKERSESHTSPVARRLFSIMEEKKSNLCASLDITETEKLLSILDTIGPYICLVKTHIDIVSDFTYEGTVLPLKELAKKHNFMIFEDRKFADIGNTVKNQYKSGVFRIAEWADITNAHGVTGAGIVSGLKEAAQETTSEPRGLLMLAELSSKGSLAYGEYTEKTVEIAKSDKEFVIGFIAQHDMGGREEGFDWIIMTPGVGLDDKGDALGQQYRTVDEVVKTGTDIIIVGRGLYGQGRDPIEQAKRYQQAGWNAYLNRFK.

Substrate contacts are provided by residues aspartate 35, 57–59 (KTH), 89–98 (DRKFADIGNT), tyrosine 215, and arginine 233. The active-site Proton donor is lysine 91.

The protein belongs to the OMP decarboxylase family.

It catalyses the reaction orotidine 5'-phosphate + H(+) = UMP + CO2. It functions in the pathway pyrimidine metabolism; UMP biosynthesis via de novo pathway; UMP from orotate: step 2/2. The polypeptide is Orotidine 5'-phosphate decarboxylase (URA3) (Pichia kudriavzevii (Yeast)).